Here is a 174-residue protein sequence, read N- to C-terminus: ATP-dependent protease subunit HslV (174 aa).

The active site involves threonine 2. The Na(+) site is built by glycine 157, cysteine 160, and threonine 163.

It belongs to the peptidase T1B family. HslV subfamily. In terms of assembly, a double ring-shaped homohexamer of HslV is capped on each side by a ring-shaped HslU homohexamer. The assembly of the HslU/HslV complex is dependent on binding of ATP.

It is found in the cytoplasm. It carries out the reaction ATP-dependent cleavage of peptide bonds with broad specificity.. Allosterically activated by HslU binding. Protease subunit of a proteasome-like degradation complex believed to be a general protein degrading machinery. This chain is ATP-dependent protease subunit HslV, found in Shewanella halifaxensis (strain HAW-EB4).